Reading from the N-terminus, the 829-residue chain is Ectonucleotide pyrophosphatase/phosphodiesterase C27A7.1 (829 aa).

A helical; Signal-anchor for type II membrane protein transmembrane segment spans residues 54-74; it reads VIGIAVLLLAMVVIVVIVLLL. Thr-224 functions as the Nucleophile in the catalytic mechanism. N-linked (GlcNAc...) asparagine glycans are attached at residues Asn-296, Asn-424, Asn-514, Asn-542, Asn-582, Asn-649, Asn-733, and Asn-748. Cysteines 439 and 782 form a disulfide.

Belongs to the nucleotide pyrophosphatase/phosphodiesterase family.

The protein localises to the membrane. Functionally, probable phosphodiesterase. The sequence is that of Ectonucleotide pyrophosphatase/phosphodiesterase C27A7.1 from Caenorhabditis elegans.